Here is a 93-residue protein sequence, read N- to C-terminus: UPF0367 protein gsr3177 (93 aa).

This sequence belongs to the UPF0367 family.

This is UPF0367 protein gsr3177 from Gloeobacter violaceus (strain ATCC 29082 / PCC 7421).